Here is a 1050-residue protein sequence, read N- to C-terminus: Probable beta-glucosidase E (1050 aa).

A disordered region spans residues 1-87; it reads MPPPDSNPGS…RSSSTNGGHN (87 aa). At 1 to 174 the chain is on the cytoplasmic side; the sequence is MPPPDSNPGS…VKYARIWRRT (174 aa). A compositionally biased stretch (basic and acidic residues) spans 11-20; it reads FRDHLKHDNK. Residues 47–56 show a composition bias toward low complexity; that stretch reads SPRSASASSS. A compositionally biased stretch (polar residues) spans 78–87; it reads RSSSTNGGHN. A helical; Signal-anchor for type II membrane protein membrane pass occupies residues 175 to 195; the sequence is LVVVIVALALLVWGFLRFTAA. Residues 196 to 1050 lie on the Extracellular side of the membrane; sequence QRQGPKVWPM…SRDLPLQAKY (855 aa). N236, N244, N300, and N430 each carry an N-linked (GlcNAc...) asparagine glycan. D458 is an active-site residue. 7 N-linked (GlcNAc...) asparagine glycosylation sites follow: N501, N540, N605, N884, N920, N929, and N993.

This sequence belongs to the glycosyl hydrolase 3 family.

It is found in the cell membrane. It carries out the reaction Hydrolysis of terminal, non-reducing beta-D-glucosyl residues with release of beta-D-glucose.. It functions in the pathway glycan metabolism; cellulose degradation. Functionally, beta-glucosidases are one of a number of cellulolytic enzymes involved in the degradation of cellulosic biomass. Catalyzes the last step releasing glucose from the inhibitory cellobiose. The polypeptide is Probable beta-glucosidase E (bglE) (Aspergillus clavatus (strain ATCC 1007 / CBS 513.65 / DSM 816 / NCTC 3887 / NRRL 1 / QM 1276 / 107)).